We begin with the raw amino-acid sequence, 152 residues long: Aspartate carbamoyltransferase regulatory chain (152 aa).

Cys-107, Cys-112, Cys-136, and Cys-139 together coordinate Zn(2+).

It belongs to the PyrI family. As to quaternary structure, contains catalytic and regulatory chains. The cofactor is Zn(2+).

Its function is as follows. Involved in allosteric regulation of aspartate carbamoyltransferase. The polypeptide is Aspartate carbamoyltransferase regulatory chain (Chromobacterium violaceum (strain ATCC 12472 / DSM 30191 / JCM 1249 / CCUG 213 / NBRC 12614 / NCIMB 9131 / NCTC 9757 / MK)).